The sequence spans 379 residues: Homoserine O-acetyltransferase (379 aa).

The region spanning 45-355 is the AB hydrolase-1 domain; it reads NAILILHALT…PHGHDAFLIE (311 aa). Residue Ser-151 is the Nucleophile of the active site. Arg-220 provides a ligand contact to substrate. Catalysis depends on residues Asp-316 and His-349. Substrate is bound at residue Asp-350.

This sequence belongs to the AB hydrolase superfamily. MetX family. Homodimer.

It is found in the cytoplasm. The enzyme catalyses L-homoserine + acetyl-CoA = O-acetyl-L-homoserine + CoA. The protein operates within amino-acid biosynthesis; L-methionine biosynthesis via de novo pathway; O-acetyl-L-homoserine from L-homoserine: step 1/1. Its function is as follows. Transfers an acetyl group from acetyl-CoA to L-homoserine, forming acetyl-L-homoserine. This Carboxydothermus hydrogenoformans (strain ATCC BAA-161 / DSM 6008 / Z-2901) protein is Homoserine O-acetyltransferase.